The sequence spans 506 residues: Acrylate reductase flavoprotein subunit (506 aa).

Residues 1–30 (MSNKDLLGRRNFIKGMGAAAGVAMAAPALA) constitute a signal peptide (tat-type signal). A54, E74, N82, G87, and G88 together coordinate FAD. R333 (proton donor) is an active-site residue. 2 residues coordinate FAD: E473 and I489.

This sequence belongs to the FAD-dependent oxidoreductase 2 family. FRD/SDH subfamily. The ArdAB flavocytochrome c is composed of a FAD-containing subunit (ArdA) and a heme c-containing subunit (ArdB). It depends on FAD as a cofactor. In terms of processing, predicted to be exported by the Tat system. The position of the signal peptide cleavage has not been experimentally proven.

It localises to the periplasm. Methacrylate acts as a competitive inhibitor of the acrylate reductase activity and suppresses the reductase activity in dose-dependent manner. FAD-containing subunit of the ArdAB flavocytochrome c, which catalyzes the reduction of acrylate to propanoate and supports dimethylsulfoniopropionate-dependent anaerobic respiration. In vitro, can use the artificial electron donor methyl viologen. The natural electron donor is probably a low-potential cytochrome c. Also shows weak activity toward methacrylate in vitro (at a 22-fold lower rate) but cannot use other tested 2-enoates, including crotonic, fumaric, sorbic, urocanic, cinnamic, p-coumaric, caffeic or ferulic acids. The protein catalyzes a unidirectional reaction and cannot oxidize propanoate with phenazine metasulfate and dichlorophenolindophenol as electron acceptors. The sequence is that of Acrylate reductase flavoprotein subunit from Shewanella woodyi (strain ATCC 51908 / MS32).